A 601-amino-acid polypeptide reads, in one-letter code: Ubiquilin-4 (601 aa).

The Ubiquitin-like domain maps to I13 to K87. Residues K23 and K62 each participate in a glycyl lysine isopeptide (Lys-Gly) (interchain with G-Cter in SUMO2) cross-link. Positions K87–T155 are disordered. Low complexity predominate over residues A88–S138. Phosphoserine occurs at positions 98 and 144. Positions S139–E149 are enriched in gly residues. 2 consecutive STI1 domains span residues N192–M229 and E230–M261. T287 is subject to Phosphothreonine. Positions F301–F366 are disordered. Over residues S307 to S318 the composition is skewed to low complexity. At S318 the chain carries Phosphoserine; by ATM. A compositionally biased stretch (pro residues) spans L329 to S340. A compositionally biased stretch (gly residues) spans G344–G354. Over residues Q357–F366 the composition is skewed to polar residues. STI1 domains follow at residues N393–L440 and L444–L476. The tract at residues L490–Q533 is disordered. Over residues A507–Q533 the composition is skewed to low complexity. Positions Q553–S598 constitute a UBA domain.

In terms of assembly, homooligomer. Binds signal sequences of proteins that are targeted to the endoplasmic reticulum. Interacts (via UBA domain) with GJA1 (not ubiquitinated) and with ubiquitin; both compete for the same binding site. Interacts (via UBA domain) with ubiquitin and with polyubiquitin chains. Interacts (via ubiquitin-like domain) with PSMD2 and PSMD4, regulatory subunits of the 26S proteasome. Interacts with ATXN1/SCA1; interaction with ATXN1 inhibits polyubiquitination of UBQLN4 and interferes with PSMD4 binding. Interacts with HERPUD1. Interacts (via ubiquitin-like domain) with UBQLN1 (via UBA domain). Interacts with UBQLN2. Interacts (via STI1 1 and 2 domains) with MAP1LC3A/B/C. Interacts with BAG6. Interacts with MRE11 (when ubiquitinated); interaction with ubiquitinated MRE11 leads to MRE11 removal from chromatin. Interacts with DESI1/POST; leading to nuclear export. Interacts with BCL2A1 and BCL2L10. (Microbial infection) Interacts with Mumps virus protein SH. Post-translationally, phosphorylated by ATM at Ser-318 in response to DNA damage, leading to localization in the nucleus and recruitment to sites of DNA damage. In terms of processing, ubiquitinated; this does not lead to proteasomal degradation. May undergo both 'Lys-48'- and 'Lys-63'-linked polyubiquitination. Highly expressed in pancreas, kidney, skeletal muscle, heart and throughout the brain, and at lower levels in placenta, lung and liver.

It localises to the nucleus. The protein resides in the cytoplasm. It is found in the chromosome. Its subcellular location is the endoplasmic reticulum. The protein localises to the perinuclear region. It localises to the cytoplasmic vesicle. The protein resides in the autophagosome. In terms of biological role, regulator of protein degradation that mediates the proteasomal targeting of misfolded, mislocalized or accumulated proteins. Acts by binding polyubiquitin chains of target proteins via its UBA domain and by interacting with subunits of the proteasome via its ubiquitin-like domain. Key regulator of DNA repair that represses homologous recombination repair: in response to DNA damage, recruited to sites of DNA damage following phosphorylation by ATM and acts by binding and removing ubiquitinated MRE11 from damaged chromatin, leading to MRE11 degradation by the proteasome. MRE11 degradation prevents homologous recombination repair, redirecting double-strand break repair toward non-homologous end joining (NHEJ). Specifically recognizes and binds mislocalized transmembrane-containing proteins and targets them to proteasomal degradation. Collaborates with DESI1/POST in the export of ubiquitinated proteins from the nucleus to the cytoplasm. Also plays a role in the regulation of the proteasomal degradation of non-ubiquitinated GJA1. Acts as an adapter protein that recruits UBQLN1 to the autophagy machinery. Mediates the association of UBQLN1 with autophagosomes and the autophagy-related protein LC3 (MAP1LC3A/B/C) and may assist in the maturation of autophagosomes to autolysosomes by mediating autophagosome-lysosome fusion. The sequence is that of Ubiquilin-4 from Homo sapiens (Human).